The sequence spans 356 residues: Peptide chain release factor 1 (356 aa).

Glutamine 233 bears the N5-methylglutamine mark.

Belongs to the prokaryotic/mitochondrial release factor family. In terms of processing, methylated by PrmC. Methylation increases the termination efficiency of RF1.

The protein localises to the cytoplasm. In terms of biological role, peptide chain release factor 1 directs the termination of translation in response to the peptide chain termination codons UAG and UAA. This Syntrophotalea carbinolica (strain DSM 2380 / NBRC 103641 / GraBd1) (Pelobacter carbinolicus) protein is Peptide chain release factor 1.